The primary structure comprises 57 residues: Small ribosomal subunit protein bS21 (57 aa).

Belongs to the bacterial ribosomal protein bS21 family.

This Bacillus pumilus (strain SAFR-032) protein is Small ribosomal subunit protein bS21.